A 208-amino-acid polypeptide reads, in one-letter code: Putative speedy protein E7 (208 aa).

The protein belongs to the Speedy/Ringo family.

The protein is Putative speedy protein E7 (SPDYE7P) of Homo sapiens (Human).